A 404-amino-acid polypeptide reads, in one-letter code: CCA-adding enzyme (404 aa).

Residues Gly27 and Arg30 each coordinate ATP. The CTP site is built by Gly27 and Arg30. Mg(2+)-binding residues include Asp40 and Asp42. 5 residues coordinate ATP: Arg111, Asp154, Arg157, Arg160, and Arg163. Residues Arg111, Asp154, Arg157, Arg160, and Arg163 each contribute to the CTP site.

This sequence belongs to the tRNA nucleotidyltransferase/poly(A) polymerase family. Bacterial CCA-adding enzyme type 3 subfamily. As to quaternary structure, homodimer. Requires Mg(2+) as cofactor.

It carries out the reaction a tRNA precursor + 2 CTP + ATP = a tRNA with a 3' CCA end + 3 diphosphate. The enzyme catalyses a tRNA with a 3' CCA end + 2 CTP + ATP = a tRNA with a 3' CCACCA end + 3 diphosphate. In terms of biological role, catalyzes the addition and repair of the essential 3'-terminal CCA sequence in tRNAs without using a nucleic acid template. Adds these three nucleotides in the order of C, C, and A to the tRNA nucleotide-73, using CTP and ATP as substrates and producing inorganic pyrophosphate. tRNA 3'-terminal CCA addition is required both for tRNA processing and repair. Also involved in tRNA surveillance by mediating tandem CCA addition to generate a CCACCA at the 3' terminus of unstable tRNAs. While stable tRNAs receive only 3'-terminal CCA, unstable tRNAs are marked with CCACCA and rapidly degraded. The protein is CCA-adding enzyme of Geobacillus sp. (strain WCH70).